The sequence spans 194 residues: dTTP/UTP pyrophosphatase (194 aa).

Catalysis depends on aspartate 69, which acts as the Proton acceptor.

Belongs to the Maf family. YhdE subfamily. Requires a divalent metal cation as cofactor.

It localises to the cytoplasm. The catalysed reaction is dTTP + H2O = dTMP + diphosphate + H(+). It catalyses the reaction UTP + H2O = UMP + diphosphate + H(+). Its function is as follows. Nucleoside triphosphate pyrophosphatase that hydrolyzes dTTP and UTP. May have a dual role in cell division arrest and in preventing the incorporation of modified nucleotides into cellular nucleic acids. This Moorella thermoacetica (strain ATCC 39073 / JCM 9320) protein is dTTP/UTP pyrophosphatase.